The chain runs to 859 residues: Leucine--tRNA ligase (859 aa).

The 'HIGH' region signature appears at 42 to 52 (PYPSGRLHMGH). A 'KMSKS' region motif is present at residues 618 to 622 (KMSKS). Lys-621 contacts ATP.

It belongs to the class-I aminoacyl-tRNA synthetase family.

Its subcellular location is the cytoplasm. The enzyme catalyses tRNA(Leu) + L-leucine + ATP = L-leucyl-tRNA(Leu) + AMP + diphosphate. This chain is Leucine--tRNA ligase, found in Shewanella sp. (strain MR-4).